The primary structure comprises 1041 residues: MENAHTKTVEEVLAYFGVNESTGLSLEQVKKLKEKWGSNELPAEEGKTLLELVIEQFEDLLVRILLLAACISFVLAWFEEGEETITAFVEPFVILLILVANAIVGVWQERNAENAIEALKEYEPEMGKVYRQDRKSVQRIKARDIVPGDIVEVAVGDKVPADIRITSIKSTTLRVDQSILTGESVSVIKHTDPVPDPRAVNQDKKNMLFSGTNIAAGKAMGVVIATGVNTEIGKIRDEMVATEQERTPLQQKLDEFGEQLSKVISLICIAVWIINIGHFNDPVHGGSWIRGAIYYFKIAVALAVAAIPEGLPAVITTCLALGTRRMAKKNAIVRSLPSVETLGCTSVICSDKTGTLTTNQMSVCRMFILDKVEGDSCSLNEFTVTGSTYAPMGEVHKDDKLIKCSQYDGLVELATICALCNDSSLDYNEAKGVYEKVGEATETALTCLVEKMNVFDTDLKGLSRIERANACNSVIKQLMKKEFTLEFSRDRKSMSVYCTPNKPSRTSMSKMFVKGAPEGVIDRCTHVRVGNAKIPLSSGIKQKIMSVIREWGTGRDTLRCLALATHDNPPRKEEMNLEDSSNFINYETNLTFVGCVGMLDPPRIEVASSIKLCKQAGIRVIMITGDNKGTAVAICRRIGIFVEDEDVSTKAFTGREFDELSLAAQRDACHHARCFARVEPSHKSKIVEFLQSFDEITAMTGDGVNDAPALKKAEIGIAMGSGTAVAKTASEMVLADDNFSTIVAAVEEGRAIYNNMKQFIRYLISSNVGEVVCIFLTAALGFPEALIPVQLLWVNLVTDGLPATALGFNPPDLDIMNKPPRNPKEPLISGWLFFRYLAIGCYVGAATVGAAAWWFIAADGGPRVTFYQLSHFLQCKEDNPDFSGVDCVVFESPYPMTMALSVLVTIEMCNALNSLSENQSLMRMPPWENIWLVGAICLSMSLHFLILYVEPLPIIFQITPLNVTQWLMVLKISLPVILLDETLKYVARNYLEPGKDSVQPATKPCSLSACTEGVSWPFVFITLPLVIWLYSTDTNFSDMFW.

At 1 to 48 (MENAHTKTVEEVLAYFGVNESTGLSLEQVKKLKEKWGSNELPAEEGKT) the chain is on the cytoplasmic side. A helical transmembrane segment spans residues 49-69 (LLELVIEQFEDLLVRILLLAA). Over 70–89 (CISFVLAWFEEGEETITAFV) the chain is Lumenal. The helical transmembrane segment at 90 to 110 (EPFVILLILVANAIVGVWQER) threads the bilayer. The Cytoplasmic segment spans residues 111-253 (NAENAIEALK…QERTPLQQKL (143 aa)). Residues 254 to 273 (DEFGEQLSKVISLICIAVWI) form a helical membrane-spanning segment. Topologically, residues 274-295 (INIGHFNDPVHGGSWIRGAIYY) are lumenal. Residues 296–313 (FKIAVALAVAAIPEGLPA) traverse the membrane as a helical segment. Ca(2+)-binding residues include Val-304, Ala-305, Ile-307, and Glu-309. Residues 314–756 (VITTCLALGT…EEGRAIYNNM (443 aa)) lie on the Cytoplasmic side of the membrane. Asp-351 (4-aspartylphosphate intermediate) is an active-site residue. The Mg(2+) site is built by Asp-351 and Thr-353. Thr-353, Glu-442, Arg-489, Lys-514, Arg-559, Thr-624, Gly-625, Asp-626, Arg-677, and Lys-683 together coordinate ATP. Residue Asp-702 participates in Mg(2+) binding. Asn-705 is a binding site for ATP. A helical membrane pass occupies residues 757–776 (KQFIRYLISSNVGEVVCIFL). Positions 767 and 770 each coordinate Ca(2+). Topologically, residues 777–786 (TAALGFPEAL) are lumenal. The helical transmembrane segment at 787 to 807 (IPVQLLWVNLVTDGLPATALG) threads the bilayer. The interaction with PLN stretch occupies residues 787–807 (IPVQLLWVNLVTDGLPATALG). Ca(2+) contacts are provided by Asn-795, Thr-798, and Asp-799. The Cytoplasmic segment spans residues 808-827 (FNPPDLDIMNKPPRNPKEPL). A helical membrane pass occupies residues 828 to 850 (ISGWLFFRYLAIGCYVGAATVGA). Residues 851 to 896 (AAWWFIAADGGPRVTFYQLSHFLQCKEDNPDFSGVDCVVFESPYPM) are Lumenal-facing. Cys-875 and Cys-887 are joined by a disulfide. The chain crosses the membrane as a helical span at residues 897–916 (TMALSVLVTIEMCNALNSLS). Glu-907 lines the Ca(2+) pocket. The Cytoplasmic segment spans residues 917–929 (ENQSLMRMPPWEN). Residues 930–948 (IWLVGAICLSMSLHFLILY) traverse the membrane as a helical segment. Residues 931–942 (WLVGAICLSMSL) form an interaction with PLN region. The Lumenal segment spans residues 949–963 (VEPLPIIFQITPLNV). The chain crosses the membrane as a helical span at residues 964-984 (TQWLMVLKISLPVILLDETLK). Over 985–1041 (YVARNYLEPGKDSVQPATKPCSLSACTEGVSWPFVFITLPLVIWLYSTDTNFSDMFW) the chain is Cytoplasmic.

Belongs to the cation transport ATPase (P-type) (TC 3.A.3) family. Type IIA subfamily. As to quaternary structure, interacts with sarcolipin (SLN). Interacts with phospholamban (PLN). Interacts with myoregulin (MRLN). Interacts with DWORF. Interacts with TMX2. Mg(2+) serves as cofactor. Only isoform 2 is detected in heart, while both isoforms are expressed in brain, with isoform 2 being predominant.

The protein localises to the endoplasmic reticulum membrane. It is found in the sarcoplasmic reticulum membrane. It catalyses the reaction Ca(2+)(in) + ATP + H2O = Ca(2+)(out) + ADP + phosphate + H(+). Reversibly inhibited by phospholamban (PLN) at low calcium concentrations. Inhibited by sarcolipin (SLN) and myoregulin (MRLN). Enhanced by DWORF; DWORF increases activity by displacing sarcolipin (SLN), phospholamban (PLN) and myoregulin (MRLN). Its function is as follows. This magnesium-dependent enzyme catalyzes the hydrolysis of ATP coupled with the translocation of calcium from the cytosol to the sarcoplasmic reticulum lumen. Isoform SERCA2A is involved in the regulation of the contraction/relaxation cycle. May act as a regulator of TNFSF11-mediated Ca(2+) signaling during osteoclastogenesis. This is Sarcoplasmic/endoplasmic reticulum calcium ATPase 2 (ATP2A2) from Gallus gallus (Chicken).